We begin with the raw amino-acid sequence, 513 residues long: ATP synthase subunit alpha (513 aa).

169–176 is a binding site for ATP; sequence GDRQTGKT.

It belongs to the ATPase alpha/beta chains family. F-type ATPases have 2 components, CF(1) - the catalytic core - and CF(0) - the membrane proton channel. CF(1) has five subunits: alpha(3), beta(3), gamma(1), delta(1), epsilon(1). CF(0) has three main subunits: a(1), b(2) and c(9-12). The alpha and beta chains form an alternating ring which encloses part of the gamma chain. CF(1) is attached to CF(0) by a central stalk formed by the gamma and epsilon chains, while a peripheral stalk is formed by the delta and b chains.

Its subcellular location is the cell inner membrane. It carries out the reaction ATP + H2O + 4 H(+)(in) = ADP + phosphate + 5 H(+)(out). Functionally, produces ATP from ADP in the presence of a proton gradient across the membrane. The alpha chain is a regulatory subunit. This Idiomarina loihiensis (strain ATCC BAA-735 / DSM 15497 / L2-TR) protein is ATP synthase subunit alpha.